The primary structure comprises 511 residues: Anthranilate synthase component 1 (511 aa).

Residues 1-36 (MTTHAAEAPTTDPQGAPGSQKTPDATEAEEAARATV) are disordered. The segment covering 11-23 (TDPQGAPGSQKTP) has biased composition (polar residues). L-tryptophan is bound by residues serine 84 and 292–294 (PYM). 328–329 (GT) is a chorismate binding site. Position 355 (glutamate 355) interacts with Mg(2+). Residues tyrosine 443, arginine 463, 477–479 (GAG), and glycine 479 each bind chorismate. Glutamate 492 contacts Mg(2+).

Belongs to the anthranilate synthase component I family. In terms of assembly, heterotetramer consisting of two non-identical subunits: a beta subunit (TrpG) and a large alpha subunit (TrpE). Mg(2+) serves as cofactor.

The enzyme catalyses chorismate + L-glutamine = anthranilate + pyruvate + L-glutamate + H(+). The protein operates within amino-acid biosynthesis; L-tryptophan biosynthesis; L-tryptophan from chorismate: step 1/5. Feedback inhibited by tryptophan. Part of a heterotetrameric complex that catalyzes the two-step biosynthesis of anthranilate, an intermediate in the biosynthesis of L-tryptophan. In the first step, the glutamine-binding beta subunit (TrpG) of anthranilate synthase (AS) provides the glutamine amidotransferase activity which generates ammonia as a substrate that, along with chorismate, is used in the second step, catalyzed by the large alpha subunit of AS (TrpE) to produce anthranilate. In the absence of TrpG, TrpE can synthesize anthranilate directly from chorismate and high concentrations of ammonia. The sequence is that of Anthranilate synthase component 1 (trpE) from Streptomyces coelicolor (strain ATCC BAA-471 / A3(2) / M145).